We begin with the raw amino-acid sequence, 449 residues long: Probable aminotransferase TAT1 (449 aa).

Over residues 1–12 (MNHNSNLVLPSH) the composition is skewed to polar residues. The segment at 1–20 (MNHNSNLVLPSHQTETQTQD) is disordered.

Belongs to the class-I pyridoxal-phosphate-dependent aminotransferase family. The cofactor is pyridoxal 5'-phosphate.

This is Probable aminotransferase TAT1 from Arabidopsis thaliana (Mouse-ear cress).